We begin with the raw amino-acid sequence, 354 residues long: Methionine import ATP-binding protein MetN (354 aa).

Residues 8–250 (LDHIDITFRQ…PKEALTQEFI (243 aa)) enclose the ABC transporter domain. 42–49 (GYSGAGKS) contributes to the ATP binding site.

It belongs to the ABC transporter superfamily. Methionine importer (TC 3.A.1.24) family. The complex is composed of two ATP-binding proteins (MetN), two transmembrane proteins (MetI) and a solute-binding protein (MetQ).

The protein resides in the cell membrane. The enzyme catalyses L-methionine(out) + ATP + H2O = L-methionine(in) + ADP + phosphate + H(+). The catalysed reaction is D-methionine(out) + ATP + H2O = D-methionine(in) + ADP + phosphate + H(+). Functionally, part of the ABC transporter complex MetNIQ involved in methionine import. Responsible for energy coupling to the transport system. The polypeptide is Methionine import ATP-binding protein MetN (Streptococcus pyogenes serotype M1).